We begin with the raw amino-acid sequence, 511 residues long: Putative CBL-interacting protein kinase 13 (511 aa).

In terms of domain architecture, Protein kinase spans F25–F279. Residues L31–V39 and K54 contribute to the ATP site. The Proton acceptor role is filled by D147. The segment at D165–E194 is activation loop. The interval V307–S340 is disordered. The 63-residue stretch at D321–D383 folds into the NAF domain. Residues K400–V429 form a PPI region.

Belongs to the protein kinase superfamily. CAMK Ser/Thr protein kinase family. SNF1 subfamily. Mn(2+) serves as cofactor.

The enzyme catalyses L-seryl-[protein] + ATP = O-phospho-L-seryl-[protein] + ADP + H(+). It catalyses the reaction L-threonyl-[protein] + ATP = O-phospho-L-threonyl-[protein] + ADP + H(+). Its function is as follows. CIPK serine-threonine protein kinases interact with CBL proteins. Binding of a CBL protein to the regulatory NAF domain of CIPK protein lead to the activation of the kinase in a calcium-dependent manner. This Oryza sativa subsp. japonica (Rice) protein is Putative CBL-interacting protein kinase 13 (CIPK13).